The following is an 83-amino-acid chain: MPAEKTQNVQDVFLNYIRKNKAPVTIFLVNGVKLQGIVTWFDNFSLLLRRDGHTQLVYKHAISTIMPASPVQLFEPTKEEVEA.

The Sm domain occupies 11–71 (DVFLNYIRKN…ISTIMPASPV (61 aa)).

Belongs to the Hfq family. In terms of assembly, homohexamer.

Its function is as follows. RNA chaperone that binds small regulatory RNA (sRNAs) and mRNAs to facilitate mRNA translational regulation in response to envelope stress, environmental stress and changes in metabolite concentrations. Also binds with high specificity to tRNAs. The polypeptide is RNA-binding protein Hfq (Rhodospirillum rubrum (strain ATCC 11170 / ATH 1.1.1 / DSM 467 / LMG 4362 / NCIMB 8255 / S1)).